The chain runs to 175 residues: RNA pyrophosphohydrolase (175 aa).

Positions 6-149 (GYRPNVGIVI…KRDVYRRVMK (144 aa)) constitute a Nudix hydrolase domain. The Nudix box motif lies at 38 to 59 (GGINPGETPEQAMYRELFEEVG).

Belongs to the Nudix hydrolase family. RppH subfamily. A divalent metal cation serves as cofactor.

Its function is as follows. Accelerates the degradation of transcripts by removing pyrophosphate from the 5'-end of triphosphorylated RNA, leading to a more labile monophosphorylated state that can stimulate subsequent ribonuclease cleavage. The chain is RNA pyrophosphohydrolase from Yersinia pseudotuberculosis serotype O:1b (strain IP 31758).